Consider the following 94-residue polypeptide: ATP synthase F(0) complex subunit f, mitochondrial (94 aa).

N-acetylalanine is present on Ala-2. Residue Ser-3 is modified to Phosphoserine. Lys-22 is subject to N6-acetyllysine. A helical transmembrane segment spans residues 68–85 (MVLACYVLFSYSFSYKHL).

It belongs to the ATPase F chain family. As to quaternary structure, component of the ATP synthase complex composed at least of ATP5F1A/subunit alpha, ATP5F1B/subunit beta, ATP5MC1/subunit c (homooctomer), MT-ATP6/subunit a, MT-ATP8/subunit 8, ATP5ME/subunit e, ATP5MF/subunit f, ATP5MG/subunit g, ATP5MK/subunit k, ATP5MJ/subunit j, ATP5F1C/subunit gamma, ATP5F1D/subunit delta, ATP5F1E/subunit epsilon, ATP5PF/subunit F6, ATP5PB/subunit b, ATP5PD/subunit d, ATP5PO/subunit OSCP. ATP synthase complex consists of a soluble F(1) head domain (subunits alpha(3) and beta(3)) - the catalytic core - and a membrane F(0) domain - the membrane proton channel (subunits c, a, 8, e, f, g, k and j). These two domains are linked by a central stalk (subunits gamma, delta, and epsilon) rotating inside the F1 region and a stationary peripheral stalk (subunits F6, b, d, and OSCP).

Its subcellular location is the mitochondrion. It is found in the mitochondrion inner membrane. Its function is as follows. Subunit f, of the mitochondrial membrane ATP synthase complex (F(1)F(0) ATP synthase or Complex V) that produces ATP from ADP in the presence of a proton gradient across the membrane which is generated by electron transport complexes of the respiratory chain. ATP synthase complex consist of a soluble F(1) head domain - the catalytic core - and a membrane F(1) domain - the membrane proton channel. These two domains are linked by a central stalk rotating inside the F(1) region and a stationary peripheral stalk. During catalysis, ATP synthesis in the catalytic domain of F(1) is coupled via a rotary mechanism of the central stalk subunits to proton translocation. In vivo, can only synthesize ATP although its ATP hydrolase activity can be activated artificially in vitro. Part of the complex F(0) domain. The chain is ATP synthase F(0) complex subunit f, mitochondrial from Pongo abelii (Sumatran orangutan).